The chain runs to 78 residues: Gas vesicle protein A (78 aa).

Residues leucine 9–lysine 19 form an alpha helix 1 region. A beta-strand 1 region spans residues valine 23–leucine 31. Residues valine 32 to isoleucine 34 form a beta turn region. A beta-strand 2 region spans residues glutamate 35–valine 43. Residues valine 48–threonine 67 are alpha helix 2.

It belongs to the gas vesicle GvpA family. In terms of assembly, the gas vesicle shell is 2 nm thick and consists of a single layer of this protein. It forms helical ribs nearly perpendicular to the long axis of the vesicle. Modeled as antiparallel homodimers.

It localises to the gas vesicle shell. In terms of biological role, gas vesicles are hollow, gas filled proteinaceous nanostructures found in some microorganisms. During planktonic growth they allow positioning of the organism at a favorable depth for light or nutrient acquisition. GvpA forms the protein shell. This gene replaces p-gvpA of H.salinarum very poorly, only about 1% of GVs are formed; the few gas vesicles formed are quite strong with a very high critical collapse pressure (CCP) of 0.213 MPa. Its function is as follows. Expression of a 9.5 kb mc-vac DNA fragment containing 2 divergently transcribed regions (gvpD-gvpE-gvpF-gvpG-gvpH-gvpI-gvpJ-gvpK-gvpL-gvpM and gvpA-gvpC-gvpN-gvpO) allows H.volcanii to produce gas vesicles. The sequence is that of Gas vesicle protein A from Haloferax mediterranei (strain ATCC 33500 / DSM 1411 / JCM 8866 / NBRC 14739 / NCIMB 2177 / R-4) (Halobacterium mediterranei).